Consider the following 355-residue polypeptide: uncharacterized protein (355 aa).

58 to 65 (GYIIFGIK) is a binding site for ATP.

This is an uncharacterized protein from Ureaplasma parvum serovar 3 (strain ATCC 700970).